The primary structure comprises 185 residues: Peptide methionine sulfoxide reductase MsrA (185 aa).

Cysteine 12 is a catalytic residue.

It belongs to the MsrA Met sulfoxide reductase family.

It catalyses the reaction L-methionyl-[protein] + [thioredoxin]-disulfide + H2O = L-methionyl-(S)-S-oxide-[protein] + [thioredoxin]-dithiol. The catalysed reaction is [thioredoxin]-disulfide + L-methionine + H2O = L-methionine (S)-S-oxide + [thioredoxin]-dithiol. Has an important function as a repair enzyme for proteins that have been inactivated by oxidation. Catalyzes the reversible oxidation-reduction of methionine sulfoxide in proteins to methionine. The polypeptide is Peptide methionine sulfoxide reductase MsrA (Granulibacter bethesdensis (strain ATCC BAA-1260 / CGDNIH1)).